The following is a 376-amino-acid chain: Alanine racemase (376 aa).

The active-site Proton acceptor; specific for D-alanine is the Lys-36. Lys-36 is modified (N6-(pyridoxal phosphate)lysine). Arg-134 contributes to the substrate binding site. Tyr-266 (proton acceptor; specific for L-alanine) is an active-site residue. Met-314 contacts substrate.

This sequence belongs to the alanine racemase family. Pyridoxal 5'-phosphate is required as a cofactor.

It catalyses the reaction L-alanine = D-alanine. It participates in amino-acid biosynthesis; D-alanine biosynthesis; D-alanine from L-alanine: step 1/1. In terms of biological role, catalyzes the interconversion of L-alanine and D-alanine. May also act on other amino acids. In Nitratidesulfovibrio vulgaris (strain DP4) (Desulfovibrio vulgaris), this protein is Alanine racemase (alr).